The primary structure comprises 311 residues: Probable mitochondrial phosphate carrier protein (311 aa).

The Mitochondrial intermembrane segment spans residues 1-23; that stretch reads MSTPLIPPAPPKKTLQLYTPQYY. 3 Solcar repeats span residues 21 to 105, 118 to 203, and 219 to 303; these read QYYG…FKHK, YRTS…IVEA, and EKIG…FKIM. The chain crosses the membrane as a helical span at residues 24–44; sequence GLCTLGGLLACGTTHSAITPL. Topologically, residues 45 to 67 are mitochondrial matrix; sequence DLIKCRKQVNPNIYPGNIAGFKT. Residues 68-88 traverse the membrane as a helical segment; it reads ILSKEGLRGLYTGGMPTLIGY. Topologically, residues 89-120 are mitochondrial intermembrane; sequence SLQGCGKYGFYELFKHKYSTLVGAQKAHEYRT. A helical membrane pass occupies residues 121-141; that stretch reads SIYLAASASAELLADIMLCPM. Over 142–171 the chain is Mitochondrial matrix; it reads EAIKVRVQTSNPRFANTTREAWSKIVTNEG. The helical transmembrane segment at 172–192 threads the bilayer; that stretch reads FGTLYRGLAPLWFRQIPYTMM. Topologically, residues 193–220 are mitochondrial intermembrane; it reads KFASFERIVEALYTYIGKPKNMYSKAEK. The chain crosses the membrane as a helical span at residues 221–241; it reads IGISFAGGYMAGVLCAIISHP. Over 242-269 the chain is Mitochondrial matrix; the sequence is ADVMVSKLNSNKKAGEGAGAAAARIYKE. The chain crosses the membrane as a helical span at residues 270–290; the sequence is IGFSGLWNGLGVRIVMIGTLT. Over 291-311 the chain is Mitochondrial intermembrane; sequence GAQWLIYDSFKIMCGFPATGA.

Belongs to the mitochondrial carrier (TC 2.A.29) family.

The protein resides in the mitochondrion inner membrane. Transport of phosphate groups from the cytosol to the mitochondrial matrix. This is Probable mitochondrial phosphate carrier protein from Schizosaccharomyces pombe (strain 972 / ATCC 24843) (Fission yeast).